The chain runs to 250 residues: Heme oxygenase 2 (250 aa).

H16 serves as a coordination point for heme b. Residues Q228–E250 form a disordered region.

Belongs to the heme oxygenase family. As to quaternary structure, homodimer.

The enzyme catalyses heme b + 3 reduced [NADPH--hemoprotein reductase] + 3 O2 = biliverdin IXalpha + CO + Fe(2+) + 3 oxidized [NADPH--hemoprotein reductase] + 3 H2O + H(+). Catalyzes the opening of the heme ring with the release of iron. Key enzyme in the synthesis of the chromophoric part of the photosynthetic antennae. The chain is Heme oxygenase 2 (pbsA2) from Synechocystis sp. (strain ATCC 27184 / PCC 6803 / Kazusa).